The following is a 234-amino-acid chain: Zein-alpha A30 (234 aa).

Residues Met-1–Ala-21 form the signal peptide.

The protein belongs to the zein family.

In terms of biological role, zeins are major seed storage proteins. This is Zein-alpha A30 from Zea mays (Maize).